The primary structure comprises 630 residues: Adagio-like protein 3 (630 aa).

In terms of domain architecture, PAS spans 54-126; it reads EDEAAAWEGR…PLVDPMVVSE (73 aa). Cys-102 is subject to S-4a-FMN cysteine. Residues 220 to 268 enclose the F-box domain; it reads YCCILQLSDEVLAHNILSRLSPRDVASIGSVCTRMHELTKNDHLRKMVC. Kelch repeat units lie at residues 380 to 430, 432 to 483, 485 to 537, 545 to 597, and 599 to 629; these read SWLV…CTLD, SKLV…SVFG, TKLF…RLDH, GRII…CVVG, and TRVL…PDED.

This sequence belongs to the ADAGIO family. FMN binds covalently to cysteine after exposure to blue light and is reversed in the dark.

It is found in the nucleus. It functions in the pathway protein modification; protein ubiquitination. Component of an E3 ubiquitin ligase complex that plays a central role in blue light-dependent circadian cycles. Acts as a blue light photoreceptor, due to the presence of FMN, that mediates light-regulated protein degradation of critical clock components by targeting them to the proteasome complex. The SCF(ADO3) E3 ubiquitin ligase complex is involved in the regulation of circadian clock-dependent processes including transition to flowering time, hypocotyl elongation, cotyledons and leaf movement rhythms. The sequence is that of Adagio-like protein 3 from Oryza sativa subsp. japonica (Rice).